Reading from the N-terminus, the 1033-residue chain is Immunoglobulin superfamily member 2 (1033 aa).

An N-terminal signal peptide occupies residues 1-20; it reads MACILCVASLFLSLTKFSIG. Over 21–970 the chain is Extracellular; that stretch reads QREVKIQEGP…VSSLICSSGP (950 aa). Ig-like C2-type domains follow at residues 22–141, 144–266, 279–388, 408–529, 539–657, 670–797, and 806–941; these read REVK…TNLT, PDTL…TLIT, PAAR…TQMG, PAAR…QKIS, LRVN…ARVS, PESK…RKTS, and PTGS…KWIN. Cysteines 43 and 121 form a disulfide. A glycan (N-linked (GlcNAc...) asparagine) is linked at asparagine 139. Cysteine 168 and cysteine 249 are joined by a disulfide. An EWI motif motif is present at residues 253–255; it reads EWI. Intrachain disulfides connect cysteine 304–cysteine 377, cysteine 432–cysteine 509, and cysteine 560–cysteine 638. Asparagine 677 carries an N-linked (GlcNAc...) asparagine glycan. Cystine bridges form between cysteine 695/cysteine 776 and cysteine 832/cysteine 925. The chain crosses the membrane as a helical span at residues 971-991; the sequence is LLHFLIVCPFVMLLLLATSFL. Residues 992–1033 are Cytoplasmic-facing; the sequence is CLYRKARKLSQLSLSAKKEKALWVGMRKTSLQKEAGEESGHY.

In terms of processing, N-glycosylated.

The protein resides in the membrane. Its function is as follows. Plays a role as inhibitor of T-cells proliferation induced by CD3. Inhibits expression of IL2RA on activated T-cells and secretion of IL2. Inhibits tyrosine kinases that are required for IL2 production and cellular proliferation. Inhibits phospholipase C-gamma-1/PLCG1 phosphorylation and subsequent CD3-induced changes in intracellular free calcium. Prevents nuclear translocation of nuclear factor of activated T-cell to the nucleus. Plays a role in the inhibition of T-cell proliferation via IL10 secretion by cutaneous dendritic cells. This chain is Immunoglobulin superfamily member 2 (Cd101), found in Mus musculus (Mouse).